The chain runs to 234 residues: Phosphatidylcholine synthase (234 aa).

At 1–3 (MKN) the chain is on the cytoplasmic side. A helical transmembrane segment spans residues 4-24 (INLILAWLVHIFTASGLIVGL). Residues 25 to 26 (YS) lie on the Periplasmic side of the membrane. A helical membrane pass occupies residues 27 to 47 (IISIVNGNYSLLLKLTVIGLI). At 48-75 (IDGIDGTMARKLKVKELIPEIDGTLLDN) the chain is on the cytoplasmic side. Residues 76-96 (ITDYINYTFIPVIFFYLGEFI) traverse the membrane as a helical segment. At 97 to 98 (EE) the chain is on the periplasmic side. A helical transmembrane segment spans residues 99–116 (KYKVAICIGILLSSAYQF). Residues 117-126 (SRTDAKTNDN) lie on the Cytoplasmic side of the membrane. The chain crosses the membrane as a helical span at residues 127–147 (YFRGFPSLWNLFVILNIIFKM). Residues 148-149 (EQ) are Periplasmic-facing. A helical membrane pass occupies residues 150–170 (ITNLITMSICIITSFIPIKFI). Over 171 to 180 (YPSKTKELRK) the chain is Cytoplasmic. The chain crosses the membrane as a helical span at residues 181 to 201 (ITIPITIISCLIFVVSIFSEL). Topologically, residues 202-207 (STTALK) are periplasmic. A helical transmembrane segment spans residues 208-228 (MAKTVLILYFAYLTLASIYLT). The Cytoplasmic portion of the chain corresponds to 229-234 (YKTRNR).

This sequence belongs to the CDP-alcohol phosphatidyltransferase class-I family. It depends on Mn(2+) as a cofactor.

The protein localises to the cell inner membrane. It catalyses the reaction a CDP-1,2-diacyl-sn-glycerol + choline = a 1,2-diacyl-sn-glycero-3-phosphocholine + CMP + H(+). Functionally, condenses choline with CDP-diglyceride to produce phosphatidylcholine and CMP. In Borreliella burgdorferi (strain ATCC 35210 / DSM 4680 / CIP 102532 / B31) (Borrelia burgdorferi), this protein is Phosphatidylcholine synthase.